The primary structure comprises 106 residues: A-type ATP synthase subunit F (106 aa).

Belongs to the V-ATPase F subunit family. In terms of assembly, has multiple subunits with at least A(3), B(3), C, D, E, F, H, I and proteolipid K(x).

Its subcellular location is the cell membrane. Its function is as follows. Component of the A-type ATP synthase that produces ATP from ADP in the presence of a proton gradient across the membrane. The sequence is that of A-type ATP synthase subunit F from Haloferax volcanii (strain ATCC 29605 / DSM 3757 / JCM 8879 / NBRC 14742 / NCIMB 2012 / VKM B-1768 / DS2) (Halobacterium volcanii).